Here is a 952-residue protein sequence, read N- to C-terminus: MLLLLGLCLGLPLFSESQEEARSWDDTSEQVVLRVPRQLRLLQRLKTKPLMAEFSVKSTIISRYAFTTVSCRMLNRASEDQEAEFQMQIPESAFITNFTMLIGDSVYRGEITQKDKKSSESVKDKRNRTSDDNEENGSDMFKASLVIPSKDKAAFFLSYEELLQRRLGKYEHSISVRPQQLVGRLTVEVDILERSGITSLEVLPLHNSRKKGSGKAEGDVGPPPSTLINQNETFAKVIFKPTVVQQAKIAQNGILGDFIVRYDVEREQNIGDIQVLNGYFVHYFAPKNLPPLPKNVVFVLDISASMVGAKLQQTREALVTILNDLRPQDRFNIIGFSNRIKMWKDHLLPVTPDNIRNGKIYMYHLSPTGGTDINGALQAAIKLLNNYVAQNDIEDRSVSLIIFLTDGKPTFGETNTLKILSNTKEATRGQICIFTVGIGDDVDFKLLEKLSLENCGLTRRVHEEDKAGAQLIGFYDEIRTPLLSDIRIDYPPDVVEHATKTLFPNYFNGSEIVIAGKMVDKKFDQLHVEVTASNSKKFVILKRDIPVEFRKMGNDVSVTPGSARDGGKDLNHIERLWSYLTVKELLSSWRQSNSEQEKEQLRQKAQDLALNYHFLTPFTSMKLRKPGLRTNQLEDTYGMSAATGPATVVQNLREAGKQPEPDLKKTYDPRIKISKTSVDGDPHFVVDFPLSKLTVCFNIDGEPGDILRLVSDHLNSGVTVNGELIGAPAPPNGHKKQRTYFRTITILINRPERSYLEITPSRVILDGGDRLVLPCNQSVVVGSRGLEVSVSANANITVVIQGNIAFVILIHLYKNPAPFQRDHLGFYIANSRGLSDNCHGLLGQFLNQDAKLVGAPEEYGKNLSNQPFPRAEGMPEAILKVKGRRVPVVWKQRKIYNGQAQVDCWFDRNNAAKLIDGVYKDYLASHPFDTESALGLSTPRKPETDRPHEESV.

A signal peptide spans methionine 1–serine 17. The region spanning valine 35–glutamate 161 is the VIT domain. Residues asparagine 97, asparagine 127, asparagine 136, and asparagine 231 are each glycosylated (N-linked (GlcNAc...) asparagine). Positions glutamine 113 to aspartate 131 are enriched in basic and acidic residues. Positions glutamine 113–serine 138 are disordered. In terms of domain architecture, VWFA spans asparagine 295 to isoleucine 478. Asparagine 508, asparagine 776, asparagine 795, and asparagine 862 each carry an N-linked (GlcNAc...) asparagine glycan. Positions alanine 933–valine 952 are disordered. Over residues arginine 940–valine 952 the composition is skewed to basic and acidic residues.

It belongs to the ITIH family.

The protein localises to the secreted. May act as a tumor suppressor. This is Inter-alpha-trypsin inhibitor heavy chain H5 (Itih5) from Mus musculus (Mouse).